The chain runs to 190 residues: Xanthine phosphoribosyltransferase 2 (190 aa).

Residues leucine 20 and asparagine 27 each contribute to the xanthine site. Alanine 129–alanine 133 provides a ligand contact to 5-phospho-alpha-D-ribose 1-diphosphate. A xanthine-binding site is contributed by lysine 157.

The protein belongs to the purine/pyrimidine phosphoribosyltransferase family. Xpt subfamily. In terms of assembly, homodimer.

It localises to the cytoplasm. It catalyses the reaction XMP + diphosphate = xanthine + 5-phospho-alpha-D-ribose 1-diphosphate. The protein operates within purine metabolism; XMP biosynthesis via salvage pathway; XMP from xanthine: step 1/1. Converts the preformed base xanthine, a product of nucleic acid breakdown, to xanthosine 5'-monophosphate (XMP), so it can be reused for RNA or DNA synthesis. The polypeptide is Xanthine phosphoribosyltransferase 2 (Clostridium botulinum (strain ATCC 19397 / Type A)).